The chain runs to 255 residues: MPRYALRIEYDGGPFAGWQRQAAQASVQGAIETALGRLELGPHTIAAAGRTDTGVHATGQVAHCDLAREWDPFRLAGALNAHLKPLPVAIVAAARVSEEFHARFSAVERRYLFRLLARRAPEVHDRGRVWRVPHPLDAEAMRAGAAHLVGRHDFTTFRAAGCQAASPIKTLDALTLETVEGANGTEYRFHLRARSFLHNQVRSIVGTLERVGAGAWTPDQVREALDARDRAACGPVCPPQGLYLTGVGYPADPFA.

Asp-52 acts as the Nucleophile in catalysis. Tyr-111 is a substrate binding site.

This sequence belongs to the tRNA pseudouridine synthase TruA family. In terms of assembly, homodimer.

It catalyses the reaction uridine(38/39/40) in tRNA = pseudouridine(38/39/40) in tRNA. In terms of biological role, formation of pseudouridine at positions 38, 39 and 40 in the anticodon stem and loop of transfer RNAs. This Cereibacter sphaeroides (strain KD131 / KCTC 12085) (Rhodobacter sphaeroides) protein is tRNA pseudouridine synthase A.